Here is a 109-residue protein sequence, read N- to C-terminus: DNA-binding protein MJ0691 (109 aa).

Belongs to the PDCD5 family.

This is DNA-binding protein MJ0691 from Methanocaldococcus jannaschii (strain ATCC 43067 / DSM 2661 / JAL-1 / JCM 10045 / NBRC 100440) (Methanococcus jannaschii).